Consider the following 512-residue polypeptide: Maturase K (512 aa).

Belongs to the intron maturase 2 family. MatK subfamily.

It localises to the plastid. Its subcellular location is the chloroplast. In terms of biological role, usually encoded in the trnK tRNA gene intron. Probably assists in splicing its own and other chloroplast group II introns. The sequence is that of Maturase K from Lemna minuta (Least duckweed).